The primary structure comprises 326 residues: Tagatose 1,6-diphosphate aldolase (326 aa).

This sequence belongs to the aldolase LacD family.

The enzyme catalyses D-tagatofuranose 1,6-bisphosphate = D-glyceraldehyde 3-phosphate + dihydroxyacetone phosphate. Its pathway is carbohydrate metabolism; D-tagatose 6-phosphate degradation; D-glyceraldehyde 3-phosphate and glycerone phosphate from D-tagatose 6-phosphate: step 2/2. The chain is Tagatose 1,6-diphosphate aldolase from Staphylococcus aureus (strain MSSA476).